The following is a 59-amino-acid chain: Large ribosomal subunit protein uL30 (59 aa).

The protein belongs to the universal ribosomal protein uL30 family. In terms of assembly, part of the 50S ribosomal subunit.

The polypeptide is Large ribosomal subunit protein uL30 (Stutzerimonas stutzeri (strain A1501) (Pseudomonas stutzeri)).